Consider the following 192-residue polypeptide: Protein GrpE (192 aa).

Residues 1 to 20 (MEERNEQVVEEVKEEVKEAQ) show a composition bias toward basic and acidic residues. The disordered stretch occupies residues 1-39 (MEERNEQVVEEVKEEVKEAQVEEAVTSEDSEESVEEKSE). Acidic residues predominate over residues 25–34 (VTSEDSEESV).

It belongs to the GrpE family. Homodimer.

The protein localises to the cytoplasm. Functionally, participates actively in the response to hyperosmotic and heat shock by preventing the aggregation of stress-denatured proteins, in association with DnaK and GrpE. It is the nucleotide exchange factor for DnaK and may function as a thermosensor. Unfolded proteins bind initially to DnaJ; upon interaction with the DnaJ-bound protein, DnaK hydrolyzes its bound ATP, resulting in the formation of a stable complex. GrpE releases ADP from DnaK; ATP binding to DnaK triggers the release of the substrate protein, thus completing the reaction cycle. Several rounds of ATP-dependent interactions between DnaJ, DnaK and GrpE are required for fully efficient folding. This Bacillus cereus (strain ATCC 10987 / NRS 248) protein is Protein GrpE.